The primary structure comprises 188 residues: dCTP deaminase (188 aa).

Residue 109 to 114 participates in dCTP binding; that stretch reads KSTYAR. Catalysis depends on Glu-135, which acts as the Proton donor/acceptor. DCTP contacts are provided by Gln-154, Tyr-168, and Gln-178.

It belongs to the dCTP deaminase family. As to quaternary structure, homotrimer.

The catalysed reaction is dCTP + H2O + H(+) = dUTP + NH4(+). Its pathway is pyrimidine metabolism; dUMP biosynthesis; dUMP from dCTP (dUTP route): step 1/2. In terms of biological role, catalyzes the deamination of dCTP to dUTP. The sequence is that of dCTP deaminase from Helicobacter pylori (strain P12).